Reading from the N-terminus, the 485-residue chain is tRNA sulfurtransferase (485 aa).

A THUMP domain is found at 61–165 (EELIALLQRI…DDKMMLVKAR (105 aa)). ATP is bound by residues 183–184 (LI), K265, G287, and Q296. C344 and C456 are joined by a disulfide. Residues 404–483 (LGENEVILDI…FSNVRVFAKN (80 aa)) form the Rhodanese domain. The Cysteine persulfide intermediate role is filled by C456.

This sequence belongs to the ThiI family.

Its subcellular location is the cytoplasm. It carries out the reaction [ThiI sulfur-carrier protein]-S-sulfanyl-L-cysteine + a uridine in tRNA + 2 reduced [2Fe-2S]-[ferredoxin] + ATP + H(+) = [ThiI sulfur-carrier protein]-L-cysteine + a 4-thiouridine in tRNA + 2 oxidized [2Fe-2S]-[ferredoxin] + AMP + diphosphate. The enzyme catalyses [ThiS sulfur-carrier protein]-C-terminal Gly-Gly-AMP + S-sulfanyl-L-cysteinyl-[cysteine desulfurase] + AH2 = [ThiS sulfur-carrier protein]-C-terminal-Gly-aminoethanethioate + L-cysteinyl-[cysteine desulfurase] + A + AMP + 2 H(+). Its pathway is cofactor biosynthesis; thiamine diphosphate biosynthesis. Its function is as follows. Catalyzes the ATP-dependent transfer of a sulfur to tRNA to produce 4-thiouridine in position 8 of tRNAs, which functions as a near-UV photosensor. Also catalyzes the transfer of sulfur to the sulfur carrier protein ThiS, forming ThiS-thiocarboxylate. This is a step in the synthesis of thiazole, in the thiamine biosynthesis pathway. The sulfur is donated as persulfide by IscS. The polypeptide is tRNA sulfurtransferase (Haemophilus influenzae (strain PittGG)).